The chain runs to 623 residues: Xaa-Pro aminopeptidase 1 (623 aa).

Arg77 serves as a coordination point for a peptide. Lys304 is modified (N6-acetyllysine). An a peptide-binding site is contributed by His395. Mn(2+) is bound by residues Asp415, Asp426, and His489. A peptide contacts are provided by His489, His498, and Glu523. Residues Glu523 and Glu537 each contribute to the Mn(2+) site.

The protein belongs to the peptidase M24B family. In terms of assembly, homodimer. Mn(2+) serves as cofactor. As to expression, expressed in all tissues tested, including liver, adrenal decapsular tissue, adrenal capsular tissue, corpus luteum, testis, submandibular gland, thymus, brain, cerebellum and heart. Highest levels in testis.

It localises to the cytoplasm. It catalyses the reaction Release of any N-terminal amino acid, including proline, that is linked to proline, even from a dipeptide or tripeptide.. Inhibited by inositol hexakisphosphate. In terms of biological role, metalloaminopeptidase that catalyzes the removal of a penultimate prolyl residue from the N-termini of peptides, such as Arg-Pro-Pro. Contributes to the degradation of bradykinin. The polypeptide is Xaa-Pro aminopeptidase 1 (Rattus norvegicus (Rat)).